A 277-amino-acid polypeptide reads, in one-letter code: Ras suppressor protein 1 (277 aa).

The interval 1 to 23 (MSKSLKKLVEESREKNQPEVDMS) is disordered. S2 is modified (N-acetylserine). The span at 7-23 (KLVEESREKNQPEVDMS) shows a compositional bias: basic and acidic residues. LRR repeat units lie at residues 41 to 63 (HITQLVLSHNKLTTVPPNVAELK), 64 to 85 (NLEVLNFFNNQIEELPTQISSL), 87 to 108 (KLKHLNLGMNRLNTLPRGFGSS), 110 to 133 (LLEVLELTYNNLNEHSLPGNFFYL), 135 to 156 (TLRALYLSDNDFEILPPDIGKL), 158 to 179 (KLQILSLRDNDLISLPKEIGEL), and 181 to 202 (QLKELHIQGNRLTVLPPELGNL). Residues 250–277 (MQANPEPPKKNNDKSKKISRKPLAAKNK) are disordered. The segment covering 256–265 (PPKKNNDKSK) has biased composition (basic and acidic residues).

Functionally, potentially plays a role in the Ras signal transduction pathway. Capable of suppressing v-Ras transformation in vitro. This Mus musculus (Mouse) protein is Ras suppressor protein 1 (Rsu1).